The following is a 286-amino-acid chain: Shikimate dehydrogenase (NADP(+)) (286 aa).

Shikimate contacts are provided by residues 22–24 and Thr71; that span reads SRS. Lys75 (proton acceptor) is an active-site residue. Glu87 provides a ligand contact to NADP(+). Shikimate-binding residues include Asn96 and Asp111. NADP(+) is bound by residues 136–140, 160–165, and Ile225; these read GAGGA and NRTAAR. Tyr227 lines the shikimate pocket. Position 248 (Gly248) interacts with NADP(+).

This sequence belongs to the shikimate dehydrogenase family. Homodimer.

It catalyses the reaction shikimate + NADP(+) = 3-dehydroshikimate + NADPH + H(+). The protein operates within metabolic intermediate biosynthesis; chorismate biosynthesis; chorismate from D-erythrose 4-phosphate and phosphoenolpyruvate: step 4/7. Involved in the biosynthesis of the chorismate, which leads to the biosynthesis of aromatic amino acids. Catalyzes the reversible NADPH linked reduction of 3-dehydroshikimate (DHSA) to yield shikimate (SA). The protein is Shikimate dehydrogenase (NADP(+)) of Sinorhizobium fredii (strain NBRC 101917 / NGR234).